The sequence spans 263 residues: Glutathione S-transferase F8, chloroplastic (263 aa).

The transit peptide at 1 to 49 (MGAIQARLPLFLSPPSIKHHTFLHSSSSNSNFKIRSNKSSSSSSSSIIM) directs the protein to the chloroplast. The 82-residue stretch at 50-131 (ASIKVHGVPM…YLAEEYSEKG (82 aa)) folds into the GST N-terminal domain. Glutathione is bound by residues 60-61 (ST), 89-90 (HK), 102-103 (QI), and 115-116 (ES). Positions 139-263 (CKKVKATTNV…WAKVIDLQKQ (125 aa)) constitute a GST C-terminal domain. T177 carries the post-translational modification Phosphothreonine.

It belongs to the GST superfamily. Phi family. In terms of tissue distribution, isoform 1 is predominantly expressed in leaves and isoform 2 in roots.

Its subcellular location is the plastid. The protein localises to the chloroplast. The protein resides in the cytoplasm. It localises to the cytosol. It catalyses the reaction RX + glutathione = an S-substituted glutathione + a halide anion + H(+). In terms of biological role, in vitro, possesses glutathione S-transferase activity toward 1-chloro-2,4-dinitrobenzene (CDNB) and glutathione peroxidase activity toward cumene hydroperoxide and linoleic acid-13-hydroperoxide. May be involved in the conjugation of reduced glutathione to a wide number of exogenous and endogenous hydrophobic electrophiles and have a detoxification role against certain herbicides. This Arabidopsis thaliana (Mouse-ear cress) protein is Glutathione S-transferase F8, chloroplastic (GSTF8).